A 62-amino-acid chain; its full sequence is Photosystem II reaction center protein Z (62 aa).

Transmembrane regions (helical) follow at residues 8–28 and 41–61; these read TVLALIATSFLMVIGVPVIFA and FSGALLWISLVFAVGILNSFV.

This sequence belongs to the PsbZ family. As to quaternary structure, PSII is composed of 1 copy each of membrane proteins PsbA, PsbB, PsbC, PsbD, PsbE, PsbF, PsbH, PsbI, PsbJ, PsbK, PsbL, PsbM, PsbT, PsbY, PsbZ, Psb30/Ycf12, at least 3 peripheral proteins of the oxygen-evolving complex and a large number of cofactors. It forms dimeric complexes.

The protein localises to the plastid. Its subcellular location is the chloroplast thylakoid membrane. Functionally, may control the interaction of photosystem II (PSII) cores with the light-harvesting antenna, regulates electron flow through the 2 photosystem reaction centers. PSII is a light-driven water plastoquinone oxidoreductase, using light energy to abstract electrons from H(2)O, generating a proton gradient subsequently used for ATP formation. The polypeptide is Photosystem II reaction center protein Z (Mesostigma viride (Green alga)).